Here is a 99-residue protein sequence, read N- to C-terminus: Sec-independent protein translocase protein TatA (99 aa).

Residues 1–21 traverse the membrane as a helical segment; sequence MIGNLKPLEIVLIIAVILLLF. The tract at residues 46 to 99 is disordered; the sequence is AMKKDDAATAAPTTETVADDTVPPQSTTARTIQAAPGDVTSSRPVSEAKPTTQS. The segment covering 53 to 69 has biased composition (low complexity); sequence ATAAPTTETVADDTVPP. The segment covering 84-99 has biased composition (polar residues); that stretch reads VTSSRPVSEAKPTTQS.

This sequence belongs to the TatA/E family. As to quaternary structure, the Tat system comprises two distinct complexes: a TatABC complex, containing multiple copies of TatA, TatB and TatC subunits, and a separate TatA complex, containing only TatA subunits. Substrates initially bind to the TatABC complex, which probably triggers association of the separate TatA complex to form the active translocon.

The protein localises to the cell membrane. Its function is as follows. Part of the twin-arginine translocation (Tat) system that transports large folded proteins containing a characteristic twin-arginine motif in their signal peptide across membranes. TatA could form the protein-conducting channel of the Tat system. The protein is Sec-independent protein translocase protein TatA of Streptomyces griseus subsp. griseus (strain JCM 4626 / CBS 651.72 / NBRC 13350 / KCC S-0626 / ISP 5235).